Consider the following 176-residue polypeptide: Dynein light chain Tctex-type 5-B (176 aa).

This sequence belongs to the dynein light chain Tctex-type family.

The polypeptide is Dynein light chain Tctex-type 5-B (Dynlt5-b) (Xenopus laevis (African clawed frog)).